The sequence spans 1184 residues: C5a peptidase (1184 aa).

An N-terminal signal peptide occupies residues 1-31; it reads MRKKQKLPFDKLAIALMSTSILLNAQSDIKA. Polar residues-rich tracts occupy residues 33 to 52 and 89 to 100; these read TVTEDTPATEQAVETPQPTA and AKTTDTPATSKA. Residues 33–117 form a disordered region; that stretch reads TVTEDTPATE…PSQVKTLQEK (85 aa). Residues 99 to 581 form the Peptidase S8 domain; the sequence is KATIRDLNDP…AGAVDAKKAS (483 aa). Active-site charge relay system residues include Asp130, His193, and Ser512. Basic and acidic residues-rich tracts occupy residues 1029-1054, 1061-1071, 1078-1088, and 1095-1107; these read EGHSNKPEQDGSDQVPDKKPETKPEQ, PDKKPETKPEQ, PDKKPEAKPEQ, and PDKKPETKPEKDS. Residues 1029-1150 form a disordered region; that stretch reads EGHSNKPEQD…RDQLPTTNDK (122 aa). 4 repeat units span residues 1034–1067, 1068–1084, 1085–1101, and 1102–1118. The interval 1034–1118 is 4 X 17 AA tandem repeats; that stretch reads KPEQDGSDQV…GQTPGKTPQK (85 aa). Residues 1109–1123 are compositionally biased toward polar residues; it reads GQTPGKTPQKGQPSR. The short motif at 1144-1148 is the LPXTG sorting signal element; sequence LPTTN. Thr1147 is modified (pentaglycyl murein peptidoglycan amidated threonine). Residues 1148–1184 constitute a propeptide, removed by sortase; sequence NDKDTNRLHLLKLVMTTFFFGLVAHIFKTKRQKETKK.

It belongs to the peptidase S8 family. Post-translationally, cleaved by SpeB protease; leading to its degradation. Degradation by SpeB is probably strictly regulated to preserve integrity of C5a peptidase.

The protein localises to the secreted. It localises to the cell wall. The enzyme catalyses The primary cleavage site is at 67-His-|-Lys-68 in human C5a with a minor secondary cleavage site at 58-Ala-|-Ser-59.. This virulence factor of S.pyogenes specifically cleaves the human serum chemotaxin C5a at '68-Lys-|-Asp-69' bond near its C-terminus, destroying its ability to serve as a chemoattractant. This Streptococcus pyogenes serotype M6 (strain ATCC BAA-946 / MGAS10394) protein is C5a peptidase (scpA).